A 469-amino-acid polypeptide reads, in one-letter code: 3-isopropylmalate dehydratase large subunit (469 aa).

[4Fe-4S] cluster is bound by residues cysteine 350, cysteine 410, and cysteine 413.

It belongs to the aconitase/IPM isomerase family. LeuC type 1 subfamily. As to quaternary structure, heterodimer of LeuC and LeuD. It depends on [4Fe-4S] cluster as a cofactor.

The catalysed reaction is (2R,3S)-3-isopropylmalate = (2S)-2-isopropylmalate. Its pathway is amino-acid biosynthesis; L-leucine biosynthesis; L-leucine from 3-methyl-2-oxobutanoate: step 2/4. In terms of biological role, catalyzes the isomerization between 2-isopropylmalate and 3-isopropylmalate, via the formation of 2-isopropylmaleate. The chain is 3-isopropylmalate dehydratase large subunit from Rhodopseudomonas palustris (strain TIE-1).